The following is a 207-amino-acid chain: Small ribosomal subunit protein uS2 (207 aa).

Belongs to the universal ribosomal protein uS2 family.

In Nitrosopumilus maritimus (strain SCM1), this protein is Small ribosomal subunit protein uS2.